Consider the following 156-residue polypeptide: Small ribosomal subunit protein uS7 (156 aa).

Belongs to the universal ribosomal protein uS7 family. As to quaternary structure, part of the 30S ribosomal subunit. Contacts proteins S9 and S11.

In terms of biological role, one of the primary rRNA binding proteins, it binds directly to 16S rRNA where it nucleates assembly of the head domain of the 30S subunit. Is located at the subunit interface close to the decoding center, probably blocks exit of the E-site tRNA. The protein is Small ribosomal subunit protein uS7 of Shewanella amazonensis (strain ATCC BAA-1098 / SB2B).